The sequence spans 484 residues: UDP-N-acetylmuramate--L-alanine ligase (484 aa).

ATP is bound at residue Gly-125 to Thr-131.

The protein belongs to the MurCDEF family.

The protein localises to the cytoplasm. It catalyses the reaction UDP-N-acetyl-alpha-D-muramate + L-alanine + ATP = UDP-N-acetyl-alpha-D-muramoyl-L-alanine + ADP + phosphate + H(+). It functions in the pathway cell wall biogenesis; peptidoglycan biosynthesis. Its function is as follows. Cell wall formation. In Buchnera aphidicola subsp. Acyrthosiphon pisum (strain Tuc7), this protein is UDP-N-acetylmuramate--L-alanine ligase.